The sequence spans 373 residues: Erythronate-4-phosphate dehydrogenase (373 aa).

Serine 45 and threonine 67 together coordinate substrate. NAD(+) contacts are provided by residues aspartate 147, 206–208 (ASR), and aspartate 232. Residue arginine 208 is part of the active site. The active site involves glutamate 237. The active-site Proton donor is the histidine 254. An NAD(+)-binding site is contributed by glycine 257. Tyrosine 258 is a binding site for substrate.

This sequence belongs to the D-isomer specific 2-hydroxyacid dehydrogenase family. PdxB subfamily. As to quaternary structure, homodimer.

It localises to the cytoplasm. The enzyme catalyses 4-phospho-D-erythronate + NAD(+) = (R)-3-hydroxy-2-oxo-4-phosphooxybutanoate + NADH + H(+). It functions in the pathway cofactor biosynthesis; pyridoxine 5'-phosphate biosynthesis; pyridoxine 5'-phosphate from D-erythrose 4-phosphate: step 2/5. Catalyzes the oxidation of erythronate-4-phosphate to 3-hydroxy-2-oxo-4-phosphonooxybutanoate. In Tolumonas auensis (strain DSM 9187 / NBRC 110442 / TA 4), this protein is Erythronate-4-phosphate dehydrogenase.